We begin with the raw amino-acid sequence, 222 residues long: uncharacterized protein (222 aa).

The N-terminal stretch at 1–20 is a signal peptide; it reads MRTTSFAKVAALCGLLALSG. C21 carries the N-palmitoyl cysteine lipid modification. C21 carries the S-diacylglycerol cysteine lipid modification.

The protein resides in the cell membrane. This is an uncharacterized protein from Escherichia coli O157:H7.